We begin with the raw amino-acid sequence, 878 residues long: Probable glucan endo-1,3-beta-glucosidase ARB_02077 (878 aa).

Residues 1–27 form the signal peptide; sequence MARGLVSSLLLGQLLLVLVGLFSPAGA. N-linked (GlcNAc...) asparagine glycosylation is found at Asn-228, Asn-257, Asn-290, and Asn-297. The segment at 373–472 is disordered; the sequence is AGSGSKAKRL…TACPSAPVTK (100 aa). Over residues 400-416 the composition is skewed to pro residues; it reads APAPQPPAQSTAPPYPI. The segment covering 433–452 has biased composition (low complexity); that stretch reads VPTRVPTGGVPSGTTGTAPS. 4 N-linked (GlcNAc...) asparagine glycosylation sites follow: Asn-505, Asn-659, Asn-795, and Asn-862.

This sequence belongs to the glycosyl hydrolase 55 family.

It localises to the secreted. The catalysed reaction is Hydrolysis of (1-&gt;3)-beta-D-glucosidic linkages in (1-&gt;3)-beta-D-glucans.. Probable glucan endo-1,3-beta-glucosidase involved in the hydrolysis of fungal cell wall. Classified as a small-oligosaccharide-producing type based its the end products: glucose, laminaribiose or laminaritetraose. The sequence is that of Probable glucan endo-1,3-beta-glucosidase ARB_02077 from Arthroderma benhamiae (strain ATCC MYA-4681 / CBS 112371) (Trichophyton mentagrophytes).